We begin with the raw amino-acid sequence, 283 residues long: Nicotine 6-hydroxylase medium subunit (283 aa).

The FAD-binding PCMH-type domain occupies 1–176 (MKLPAIRYAS…TDVWIPSRPN (176 aa)). Residues 31-35 (AGGQS) and 110-114 (TLGGS) each bind FAD.

In terms of assembly, heterotrimer composed of a large subunit (NdhL), a medium subunit (NdhM) and a small subunit (NdhS). FAD is required as a cofactor.

It localises to the cytoplasm. The catalysed reaction is (R)-nicotine + A + H2O = (R)-6-hydroxynicotine + AH2. It carries out the reaction (S)-nicotine + A + H2O = (S)-6-hydroxynicotine + AH2. It functions in the pathway alkaloid degradation; nicotine degradation; 6-hydroxypseudooxynicotine from nicotine (R-isomer route): step 1/2. Its pathway is alkaloid degradation; nicotine degradation; 6-hydroxypseudooxynicotine from nicotine (S-isomer route): step 1/2. Nicotine dehydrogenase activity is inhibited by tungsten. Its function is as follows. Component of the nicotine 6-hydroxylase, which is involved in the degradation of nicotine. Catalyzes the hydroxylation of the pyridine ring at C6 to form 6-hydroxynicotine. Can use both L-nicotine and D-nicotine. The protein is Nicotine 6-hydroxylase medium subunit of Paenarthrobacter nicotinovorans (Arthrobacter nicotinovorans).